Here is a 514-residue protein sequence, read N- to C-terminus: Beta-glucosidase 21 (514 aa).

The signal sequence occupies residues 1 to 25 (MERPLHLLLVFLSSPWLLLLQGVSS). A beta-D-glucoside-binding residues include Gln47 and His147. Residue Glu193 is the Proton donor of the active site. Cys212 and Cys220 form a disulfide bridge. Residues Asn219 and Asn224 are each glycosylated (N-linked (GlcNAc...) asparagine). Tyr336 and Glu406 together coordinate a beta-D-glucoside. Catalysis depends on Glu406, which acts as the Nucleophile. Residue Asn407 is glycosylated (N-linked (GlcNAc...) asparagine). A beta-D-glucoside-binding residues include Trp448 and Phe465. N-linked (GlcNAc...) asparagine glycosylation occurs at Asn494.

Belongs to the glycosyl hydrolase 1 family.

The catalysed reaction is Hydrolysis of terminal, non-reducing beta-D-glucosyl residues with release of beta-D-glucose.. The protein is Beta-glucosidase 21 (BGLU21) of Oryza sativa subsp. japonica (Rice).